The chain runs to 137 residues: Small ribosomal subunit protein uS9 (137 aa).

Residues 103–137 are disordered; that stretch reads PPLKAEGYLTRDPRAKERKKYGLHKARKAPQYSKR. Positions 118-137 are enriched in basic residues; it reads KERKKYGLHKARKAPQYSKR.

This sequence belongs to the universal ribosomal protein uS9 family.

The polypeptide is Small ribosomal subunit protein uS9 (Crocosphaera subtropica (strain ATCC 51142 / BH68) (Cyanothece sp. (strain ATCC 51142))).